The following is a 462-amino-acid chain: Argininosuccinate lyase (462 aa).

Belongs to the lyase 1 family. Argininosuccinate lyase subfamily.

Its subcellular location is the cytoplasm. It catalyses the reaction 2-(N(omega)-L-arginino)succinate = fumarate + L-arginine. It participates in amino-acid biosynthesis; L-arginine biosynthesis; L-arginine from L-ornithine and carbamoyl phosphate: step 3/3. This is Argininosuccinate lyase from Chloroflexus aggregans (strain MD-66 / DSM 9485).